Reading from the N-terminus, the 439-residue chain is Chromosomal replication initiator protein DnaA (439 aa).

The interval 1–72 (MEQFSAFKLL…SKLYDDIRAV (72 aa)) is domain I, interacts with DnaA modulators. Residues 72–99 (VRFVNEQDFFINLAKLEEDNRETLYQSS) are domain II. The interval 100–322 (GLSKNFTFKN…GIATKLLFYV (223 aa)) is domain III, AAA+ region. 4 residues coordinate ATP: glycine 144, glycine 146, lysine 147, and threonine 148. The interval 323 to 439 (KTTKQNLINN…LQDIITSLVI (117 aa)) is domain IV, binds dsDNA.

It belongs to the DnaA family. Oligomerizes as a right-handed, spiral filament on DNA at oriC.

Its subcellular location is the cytoplasm. Plays an essential role in the initiation and regulation of chromosomal replication. ATP-DnaA binds to the origin of replication (oriC) to initiate formation of the DNA replication initiation complex once per cell cycle. Binds the DnaA box (a 9 base pair repeat at the origin) and separates the double-stranded (ds)DNA. Forms a right-handed helical filament on oriC DNA; dsDNA binds to the exterior of the filament while single-stranded (ss)DNA is stabiized in the filament's interior. The ATP-DnaA-oriC complex binds and stabilizes one strand of the AT-rich DNA unwinding element (DUE), permitting loading of DNA polymerase. After initiation quickly degrades to an ADP-DnaA complex that is not apt for DNA replication. Binds acidic phospholipids. This Mycoplasma pneumoniae (strain ATCC 29342 / M129 / Subtype 1) (Mycoplasmoides pneumoniae) protein is Chromosomal replication initiator protein DnaA.